The following is a 254-amino-acid chain: Ribose-5-phosphate isomerase A (254 aa).

Substrate-binding positions include 45–48 (TGST), 105–108 (DGAD), and 118–121 (KGGG). Catalysis depends on Glu127, which acts as the Proton acceptor. Lys145 lines the substrate pocket.

The protein belongs to the ribose 5-phosphate isomerase family. In terms of assembly, homodimer.

The catalysed reaction is aldehydo-D-ribose 5-phosphate = D-ribulose 5-phosphate. It functions in the pathway carbohydrate degradation; pentose phosphate pathway; D-ribose 5-phosphate from D-ribulose 5-phosphate (non-oxidative stage): step 1/1. Functionally, catalyzes the reversible conversion of ribose-5-phosphate to ribulose 5-phosphate. This is Ribose-5-phosphate isomerase A from Treponema pallidum subsp. pallidum (strain SS14).